A 413-amino-acid chain; its full sequence is MKIYAVGGAIRDALLGLPVRDRDYVVVGATPEQMAAQRFRPVGKDFPVFLHPDTHEEYALARTERKTAAGYHGFQFYYAPDVTLEQDLVRRDLTINAMAREVSPDGALVGPVVDPFGGQADLRAKLFRHVGDAFVEDPVRILRVARFAARFAEFAVAPDTAALMRAMVDAGEVDALVPERVWQELARGLMEAKPSRMFAVLRECGALARILPEIDALFGVPQRADYHPEVDTGVHVMMVIDHAAKQGYSLPVRFAALTHDLGKATTPADVLPRHIGHEGRSVDLLKPLCERLRVPNECRDLALVVAREHGNLHRVMEMGAAALVRLLERADALRKPARFAEALQASEADARGRLGLETKPYPQAERLRQALVAARAVDAGAIAQGLAGEPAKIKDAVHRARVRAVAQAVGVAD.

Residues Gly-8 and Arg-11 each coordinate ATP. CTP-binding residues include Gly-8 and Arg-11. 2 residues coordinate Mg(2+): Asp-21 and Asp-23. ATP is bound by residues Arg-91, Arg-143, and Arg-146. 3 residues coordinate CTP: Arg-91, Arg-143, and Arg-146. The region spanning 232 to 333 is the HD domain; the sequence is TGVHVMMVID…VRLLERADAL (102 aa).

The protein belongs to the tRNA nucleotidyltransferase/poly(A) polymerase family. Bacterial CCA-adding enzyme type 1 subfamily. Monomer. Can also form homodimers and oligomers. Mg(2+) serves as cofactor. Ni(2+) is required as a cofactor.

The catalysed reaction is a tRNA precursor + 2 CTP + ATP = a tRNA with a 3' CCA end + 3 diphosphate. It catalyses the reaction a tRNA with a 3' CCA end + 2 CTP + ATP = a tRNA with a 3' CCACCA end + 3 diphosphate. In terms of biological role, catalyzes the addition and repair of the essential 3'-terminal CCA sequence in tRNAs without using a nucleic acid template. Adds these three nucleotides in the order of C, C, and A to the tRNA nucleotide-73, using CTP and ATP as substrates and producing inorganic pyrophosphate. tRNA 3'-terminal CCA addition is required both for tRNA processing and repair. Also involved in tRNA surveillance by mediating tandem CCA addition to generate a CCACCA at the 3' terminus of unstable tRNAs. While stable tRNAs receive only 3'-terminal CCA, unstable tRNAs are marked with CCACCA and rapidly degraded. The sequence is that of Multifunctional CCA protein from Burkholderia mallei (strain NCTC 10247).